The following is a 339-amino-acid chain: Transaldolase (339 aa).

Lys-135 functions as the Schiff-base intermediate with substrate in the catalytic mechanism.

The protein belongs to the transaldolase family. Type 1 subfamily. As to quaternary structure, homodimer.

It localises to the cytoplasm. It catalyses the reaction D-sedoheptulose 7-phosphate + D-glyceraldehyde 3-phosphate = D-erythrose 4-phosphate + beta-D-fructose 6-phosphate. The protein operates within carbohydrate degradation; pentose phosphate pathway; D-glyceraldehyde 3-phosphate and beta-D-fructose 6-phosphate from D-ribose 5-phosphate and D-xylulose 5-phosphate (non-oxidative stage): step 2/3. Functionally, transaldolase is important for the balance of metabolites in the pentose-phosphate pathway. The sequence is that of Transaldolase from Prochlorococcus marinus (strain MIT 9211).